A 109-amino-acid polypeptide reads, in one-letter code: MKLSIIIIATSLVIAVVAFPSKDSKAIENDKTEQRMEIVVQETARACSKQIGNKCKRNCECCGKTVVCGTIYVGGKEVNQCMDKTSDNAILNGLGKGMNFIENTFSFCV.

An N-terminal signal peptide occupies residues 1-18 (MKLSIIIIATSLVIAVVA). Positions 19–46 (FPSKDSKAIENDKTEQRMEIVVQETARA) are excised as a propeptide. 4 disulfides stabilise this stretch: cysteine 47–cysteine 62, cysteine 55–cysteine 68, cysteine 59–cysteine 108, and cysteine 61–cysteine 81.

The protein belongs to the neurotoxin 25 family. F7 subfamily. Expressed by the venom gland.

It is found in the secreted. Putative ion channel inhibitor. The protein is Hainantoxin-XVIII-5 of Cyriopagopus hainanus (Chinese bird spider).